The following is a 430-amino-acid chain: S-adenosylmethionine synthase (430 aa).

Position 14 (histidine 14) interacts with ATP. Aspartate 16 provides a ligand contact to Mg(2+). Residue glutamate 42 coordinates K(+). L-methionine is bound by residues glutamate 55 and glutamine 98. Residues 98–108 (QSADINRGVER) are flexible loop. ATP contacts are provided by residues 164 to 166 (DAK), 254 to 255 (KF), aspartate 263, 269 to 270 (RK), alanine 286, and lysine 290. Residue aspartate 263 coordinates L-methionine. Lysine 294 serves as a coordination point for L-methionine.

This sequence belongs to the AdoMet synthase family. As to quaternary structure, homotetramer; dimer of dimers. It depends on Mg(2+) as a cofactor. K(+) serves as cofactor.

It is found in the cytoplasm. The catalysed reaction is L-methionine + ATP + H2O = S-adenosyl-L-methionine + phosphate + diphosphate. The protein operates within amino-acid biosynthesis; S-adenosyl-L-methionine biosynthesis; S-adenosyl-L-methionine from L-methionine: step 1/1. In terms of biological role, catalyzes the formation of S-adenosylmethionine (AdoMet) from methionine and ATP. The overall synthetic reaction is composed of two sequential steps, AdoMet formation and the subsequent tripolyphosphate hydrolysis which occurs prior to release of AdoMet from the enzyme. The protein is S-adenosylmethionine synthase of Phocaeicola vulgatus (strain ATCC 8482 / DSM 1447 / JCM 5826 / CCUG 4940 / NBRC 14291 / NCTC 11154) (Bacteroides vulgatus).